Here is a 447-residue protein sequence, read N- to C-terminus: tRNA (guanine(37)-N(1))-methyltransferase (447 aa).

Residues His-241, 285–286, and 313–314 each bind S-adenosyl-L-methionine; these read DL and DV.

Belongs to the class I-like SAM-binding methyltransferase superfamily. TRM5/TYW2 family. In terms of assembly, monomer.

It localises to the mitochondrion matrix. Its subcellular location is the nucleus. The protein localises to the cytoplasm. It carries out the reaction guanosine(37) in tRNA + S-adenosyl-L-methionine = N(1)-methylguanosine(37) in tRNA + S-adenosyl-L-homocysteine + H(+). In terms of biological role, specifically methylates the N1 position of guanosine-37 in various cytoplasmic and mitochondrial tRNAs. Methylation is not dependent on the nature of the nucleoside 5' of the target nucleoside. This is the first step in the biosynthesis of wybutosine (yW), a modified base adjacent to the anticodon of tRNAs and required for accurate decoding. This chain is tRNA (guanine(37)-N(1))-methyltransferase, found in Giardia intestinalis (strain ATCC 50803 / WB clone C6) (Giardia lamblia).